The sequence spans 233 residues: MQQGQMAYDRAITVFSPDGRLFQVEYAREAVKKGSTALGMKFANGVLLISDKKVRSRLIEQNSIEKIQLIDDYVAAVTSGLVADARVLVDFARISAQQEKVTYGSLVNIENLVKRVADQMQQYTQYGGVRPYGVSLIFAGIDQIGPRLFDCDPAGTINEYKATAIGSGKDAVVSFLEREYKENLPEKEAVTLGIKALKSSLEEGEELKAPEIASITVGNKYRIYDQEEVKKFL.

The protein belongs to the peptidase T1A family. As to quaternary structure, the 20S proteasome core is composed of 14 alpha and 14 beta subunits that assemble into four stacked heptameric rings, resulting in a barrel-shaped structure. The two inner rings, each composed of seven catalytic beta subunits, are sandwiched by two outer rings, each composed of seven alpha subunits. The catalytic chamber with the active sites is on the inside of the barrel. Has a gated structure, the ends of the cylinder being occluded by the N-termini of the alpha-subunits. Is capped at one or both ends by the proteasome regulatory ATPase, PAN. In terms of processing, the N-terminus is blocked.

It localises to the cytoplasm. Its activity is regulated as follows. The formation of the proteasomal ATPase PAN-20S proteasome complex, via the docking of the C-termini of PAN into the intersubunit pockets in the alpha-rings, triggers opening of the gate for substrate entry. Interconversion between the open-gate and close-gate conformations leads to a dynamic regulation of the 20S proteasome proteolysis activity. Component of the proteasome core, a large protease complex with broad specificity involved in protein degradation. The T.acidophilum proteasome is able to cleave oligopeptides after Tyr, Leu, Phe, and to a lesser extent after Glu and Arg. Thus, displays chymotrypsin-like activity and low level of caspase-like and trypsin-like activities. This is Proteasome subunit alpha from Thermoplasma acidophilum (strain ATCC 25905 / DSM 1728 / JCM 9062 / NBRC 15155 / AMRC-C165).